Reading from the N-terminus, the 612-residue chain is UvrABC system protein C (612 aa).

Residues Thr-20–Ile-98 enclose the GIY-YIG domain. The UVR domain maps to Ser-208 to Leu-243.

Belongs to the UvrC family. In terms of assembly, interacts with UvrB in an incision complex.

The protein resides in the cytoplasm. Functionally, the UvrABC repair system catalyzes the recognition and processing of DNA lesions. UvrC both incises the 5' and 3' sides of the lesion. The N-terminal half is responsible for the 3' incision and the C-terminal half is responsible for the 5' incision. The sequence is that of UvrABC system protein C from Francisella tularensis subsp. tularensis (strain FSC 198).